A 287-amino-acid polypeptide reads, in one-letter code: Small ribosomal subunit protein uS2 (287 aa).

The segment covering 254–277 (LASATASATPSATASTTALTDAPA) has biased composition (low complexity). Residues 254-287 (LASATASATPSATASTTALTDAPAGATEPTTDAS) are disordered.

This sequence belongs to the universal ribosomal protein uS2 family.

The sequence is that of Small ribosomal subunit protein uS2 (rpsB) from Mycobacterium tuberculosis (strain CDC 1551 / Oshkosh).